The following is a 369-amino-acid chain: Methylthioribose-1-phosphate isomerase (369 aa).

Position 1 is an N-acetylmethionine (M1). R158 carries the post-translational modification Omega-N-methylarginine. D248 functions as the Proton donor in the catalytic mechanism. Position 366 is a phosphoserine (S366).

The protein belongs to the eIF-2B alpha/beta/delta subunits family. MtnA subfamily.

Its subcellular location is the cytoplasm. The protein localises to the nucleus. It catalyses the reaction 5-(methylsulfanyl)-alpha-D-ribose 1-phosphate = 5-(methylsulfanyl)-D-ribulose 1-phosphate. It functions in the pathway amino-acid biosynthesis; L-methionine biosynthesis via salvage pathway; L-methionine from S-methyl-5-thio-alpha-D-ribose 1-phosphate: step 1/6. Catalyzes the interconversion of methylthioribose-1-phosphate (MTR-1-P) into methylthioribulose-1-phosphate (MTRu-1-P). The polypeptide is Methylthioribose-1-phosphate isomerase (Mri1) (Rattus norvegicus (Rat)).